Consider the following 80-residue polypeptide: Metallothionein-like protein 1 (80 aa).

The protein belongs to the metallothionein superfamily. Type 15 family.

Its function is as follows. Metallothioneins have a high content of cysteine residues that bind various heavy metals. The chain is Metallothionein-like protein 1 (METAL1) from Coffea arabica (Arabian coffee).